An 85-amino-acid chain; its full sequence is Beta-toxin Ct6 (85 aa).

An N-terminal signal peptide occupies residues 1-18 (MKTFVLALCLVLIGMVYA). Residues 19-84 (KDGYLVSKHT…VYPLPNKSCG (66 aa)) enclose the LCN-type CS-alpha/beta domain. 4 cysteine pairs are disulfide-bonded: Cys30–Cys83, Cys34–Cys59, Cys43–Cys64, and Cys47–Cys66. Cys83 bears the Cysteine amide mark.

Belongs to the long (4 C-C) scorpion toxin superfamily. Sodium channel inhibitor family. Beta subfamily. Expressed by the venom gland.

It is found in the secreted. In terms of biological role, beta toxins bind voltage-independently at site-4 of sodium channels (Nav) and shift the voltage of activation toward more negative potentials thereby affecting sodium channel activation and promoting spontaneous and repetitive firing. In Centruroides tecomanus (Scorpion), this protein is Beta-toxin Ct6.